The sequence spans 438 residues: GTPase Der (438 aa).

2 EngA-type G domains span residues 4-168 (PIVA…PEGN) and 177-352 (IRIA…GNYC). GTP contacts are provided by residues 10–17 (GRPNVGKS), 57–61 (DTGGI), 120–123 (NKID), 183–190 (GRPNVGKS), 230–234 (DTAGL), and 295–298 (NKWD). The KH-like domain maps to 353–437 (KRIKTGILND…GIKLEFRERK (85 aa)).

This sequence belongs to the TRAFAC class TrmE-Era-EngA-EngB-Septin-like GTPase superfamily. EngA (Der) GTPase family. As to quaternary structure, associates with the 50S ribosomal subunit.

In terms of biological role, GTPase that plays an essential role in the late steps of ribosome biogenesis. The polypeptide is GTPase Der (Clostridium novyi (strain NT)).